Here is a 503-residue protein sequence, read N- to C-terminus: NAD(P)H-quinone oxidoreductase chain 4, chloroplastic (503 aa).

The next 13 membrane-spanning stretches (helical) occupy residues 4–24 (FPWL…IFFL), 37–57 (ICIC…HFQL), 87–107 (IGPT…AWPV), 134–154 (LLLF…LLSM), 167–187 (FILY…GMGL), 208–228 (ALEI…SPII), 242–262 (HYST…YGLV), 272–292 (AHSI…IYAA), 305–325 (IAYS…SITD), 330–350 (GAIL…FLAG), 386–406 (LALP…GIIT), 416–436 (ILIT…SLSM), and 462–482 (LFVS…PDFV).

The protein belongs to the complex I subunit 4 family.

It localises to the plastid. Its subcellular location is the chloroplast thylakoid membrane. It carries out the reaction a plastoquinone + NADH + (n+1) H(+)(in) = a plastoquinol + NAD(+) + n H(+)(out). The catalysed reaction is a plastoquinone + NADPH + (n+1) H(+)(in) = a plastoquinol + NADP(+) + n H(+)(out). This is NAD(P)H-quinone oxidoreductase chain 4, chloroplastic from Drimys granadensis.